The chain runs to 297 residues: Probable endonuclease 4 (297 aa).

Residues H68, H109, E144, D178, H181, H213, D226, H228, and E258 each contribute to the Zn(2+) site.

It belongs to the AP endonuclease 2 family. Requires Zn(2+) as cofactor.

It carries out the reaction Endonucleolytic cleavage to 5'-phosphooligonucleotide end-products.. In terms of biological role, endonuclease IV plays a role in DNA repair. It cleaves phosphodiester bonds at apurinic or apyrimidinic (AP) sites, generating a 3'-hydroxyl group and a 5'-terminal sugar phosphate. In Enterococcus faecalis (strain ATCC 700802 / V583), this protein is Probable endonuclease 4.